The following is a 274-amino-acid chain: MVKSLQLAHQLKDKKILLIGGGEVGLTRLYKLIPTGCKLTLVSPDLHKSIIPKFGKFIQNEDQPDYREDAKRFINPNWDPTKNEIYEYIRSDFKDEYLDLEDENDAWYIIMTCIPDHPESARIYHLCKERFGKQQLVNVADKPDLCDFYFGANLEIGDRLQILISTNGLSPRFGALVRDEIRNLFTQMGDLALEDAVVKLGELRRGIRLLAPDDKDVKYRMDWARRCTDLFGIQHCHNIDVKRLLDLFKVMFQEQNCSLQFPPRERLLSEYCSS.

Residues Glu23 to Val24, Ser43 to Asp45, and Phe93 each bind NAD(+). Asp141 acts as the Proton acceptor in catalysis.

It belongs to the precorrin-2 dehydrogenase / sirohydrochlorin ferrochelatase family. MET8 subfamily. Homodimer.

It carries out the reaction precorrin-2 + NAD(+) = sirohydrochlorin + NADH + 2 H(+). The catalysed reaction is siroheme + 2 H(+) = sirohydrochlorin + Fe(2+). It functions in the pathway porphyrin-containing compound metabolism; siroheme biosynthesis; siroheme from sirohydrochlorin: step 1/1. It participates in porphyrin-containing compound metabolism; siroheme biosynthesis; sirohydrochlorin from precorrin-2: step 1/1. In terms of biological role, catalyzes the conversion of precorrin-2 into siroheme. This reaction consist of the NAD-dependent oxidation of precorrin-2 into sirohydrochlorin and its subsequent ferrochelation into siroheme. The sequence is that of Siroheme biosynthesis protein MET8 from Saccharomyces cerevisiae (strain ATCC 204508 / S288c) (Baker's yeast).